Here is a 688-residue protein sequence, read N- to C-terminus: MMAENNLKMLKIQQCVVANKLPRNRPYVCNICFKHFETPSKLARHYLIHTGQKPFECDVCHKTFRQLVHLERHQLTHSLPFKCSICQRHFKNLKTFVKHQQLHNETYQNNVKQVRRLLEAKQEKSMYGVYNTFTTEERWALHPCSKSDPMYSMKRRKNIHACTICGKMFPSQSKLDRHVLIHTGQRPFKCVLCTKSFRQSTHLKIHQLTHSEERPFQCCFCQKGFKIQSKLLKHKQIHTRNKAFRALLLKKRRTESCPMPNKLNANQGGFENGEIGESEENNPLDVHSIYIVPFQCPKCEKCFESEQILNEHSCFPARGGKIPSRFKRSYNYKTIVKKILAKLKRARTKKLDNFQSEKKVFKKSFLRNYDLISGEQSSEQTQRTFVSSLGKHGTYKTTGNRKKKTLTLPFSWQNMGKNLKGILTTENILSIDNSVNKKDLSICGSSGEEFFNNCEVLQCGFSVPRENIRTRHKICPCDKCEKVFPSISKLKRHYLIHTGQRPFGCNICGKSFRQSAHLKRHEQTHNEKSPYASLCQVEFGNFNNLSNHPDNNVNYNASQQCQAPGVQKYEVSESDQMSGVKAESQDFIPGSTGCLPNVLLESEQSNPFCSYSEHQEKNDVFLYRCSVCAKSFRSPSKLERHYLIHAGQKPFECSVCGKTFRQAPHWKRHQLTHFKERPQGKVVCLRFG.

A Glycyl lysine isopeptide (Lys-Gly) (interchain with G-Cter in SUMO2) cross-link involves residue Lys11. 3 consecutive C2H2-type zinc fingers follow at residues 27-49 (YVCN…YLIH), 55-77 (FECD…QLTH), and 81-103 (FKCS…QQLH). Glycyl lysine isopeptide (Lys-Gly) (interchain with G-Cter in SUMO2) cross-links involve residues Lys112, Lys121, and Lys146. 3 C2H2-type zinc fingers span residues 160–182 (HACT…VLIH), 188–210 (FKCV…QLTH), and 216–238 (FQCC…KQIH). A Glycyl lysine isopeptide (Lys-Gly) (interchain with G-Cter in SUMO2) cross-link involves residue Lys262. The C2H2-type 7; degenerate zinc finger occupies 294-318 (FQCPKCEKCFESEQILNEHSCFPAR). Residues Lys420 and Lys437 each participate in a glycyl lysine isopeptide (Lys-Gly) (interchain with G-Cter in SUMO2) cross-link. 4 C2H2-type zinc fingers span residues 475–497 (CPCD…YLIH), 503–525 (FGCN…EQTH), 623–645 (YRCS…YLIH), and 651–673 (FECS…QLTH). Lys681 is covalently cross-linked (Glycyl lysine isopeptide (Lys-Gly) (interchain with G-Cter in SUMO2)).

The protein belongs to the krueppel C2H2-type zinc-finger protein family.

Its subcellular location is the nucleus. Its function is as follows. May be involved in transcriptional regulation. In Pongo abelii (Sumatran orangutan), this protein is Zinc finger protein 770 (ZNF770).